The chain runs to 429 residues: Histidine--tRNA ligase (429 aa).

Belongs to the class-II aminoacyl-tRNA synthetase family. Homodimer.

The protein resides in the cytoplasm. The enzyme catalyses tRNA(His) + L-histidine + ATP = L-histidyl-tRNA(His) + AMP + diphosphate + H(+). The sequence is that of Histidine--tRNA ligase from Pseudomonas putida (strain GB-1).